Here is a 331-residue protein sequence, read N- to C-terminus: Fe-S cluster assembly protein DRE2 (331 aa).

Residues 1 to 146 (MSEILLLLHP…MPTFKKPVSS (146 aa)) are N-terminal SAM-like domain. Residues 142 to 164 (KPVSSPVTLTDTSANNTDAEDDL) are disordered. The span at 146 to 158 (SPVTLTDTSANNT) shows a compositional bias: polar residues. The segment at 147–202 (PVTLTDTSANNTDAEDDLSMKRKLDSTKLAYFSDDSSGEEDDLIDENELIADSHKF) is linker. Cys-212, Cys-224, Cys-227, and Cys-229 together coordinate [2Fe-2S] cluster. A fe-S binding site A region spans residues 212-229 (CELPNGKKRKKACKDCTC). Positions 294, 297, 305, and 308 each coordinate [4Fe-4S] cluster. 2 consecutive short sequence motifs (cx2C motif) follow at residues 294–297 (CSSC) and 305–308 (CDGC). The tract at residues 294–308 (CSSCALGDAFRCDGC) is fe-S binding site B.

The protein belongs to the anamorsin family. As to quaternary structure, monomer. Interacts with TAH18. Interacts with MIA40. The cofactor is [2Fe-2S] cluster. It depends on [4Fe-4S] cluster as a cofactor.

The protein resides in the cytoplasm. It localises to the mitochondrion intermembrane space. Component of the cytosolic iron-sulfur (Fe-S) protein assembly (CIA) machinery required for the maturation of extramitochondrial Fe-S proteins. Part of an electron transfer chain functioning in an early step of cytosolic Fe-S biogenesis, facilitating the de novo assembly of a [4Fe-4S] cluster on the scaffold complex CFD1-NBP35. Electrons are transferred to DRE2 from NADPH via the FAD- and FMN-containing protein TAH18. TAH18-DRE2 are also required for the assembly of the diferric tyrosyl radical cofactor of ribonucleotide reductase (RNR), probably by providing electrons for reduction during radical cofactor maturation in the catalytic small subunit RNR2. The chain is Fe-S cluster assembly protein DRE2 from Clavispora lusitaniae (strain ATCC 42720) (Yeast).